Consider the following 506-residue polypeptide: Glutamate--tRNA ligase (506 aa).

Positions 12–22 (PSPTGDPHVGT) match the 'HIGH' region motif. Positions 253-257 (KLSKR) match the 'KMSKS' region motif. Residue lysine 256 participates in ATP binding.

Belongs to the class-I aminoacyl-tRNA synthetase family. Glutamate--tRNA ligase type 1 subfamily. In terms of assembly, monomer.

It is found in the cytoplasm. It catalyses the reaction tRNA(Glu) + L-glutamate + ATP = L-glutamyl-tRNA(Glu) + AMP + diphosphate. In terms of biological role, catalyzes the attachment of glutamate to tRNA(Glu) in a two-step reaction: glutamate is first activated by ATP to form Glu-AMP and then transferred to the acceptor end of tRNA(Glu). This Chlamydia muridarum (strain MoPn / Nigg) protein is Glutamate--tRNA ligase.